An 898-amino-acid chain; its full sequence is Coiled-coil domain-containing protein 186 (898 aa).

Disordered stretches follow at residues 1–43 (MSET…NESK), 68–95 (NYIP…QIAN), and 702–749 (RRKL…SSVA). S2 is subject to N-acetylserine. A compositionally biased stretch (polar residues) spans 82-95 (KTDTGSENSEQIAN). The stretch at 201–712 (KYLQQEHIIK…RKLDQVESGS (512 aa)) forms a coiled coil. Residues 703-717 (RKLDQVESGSYDKEV) are compositionally biased toward basic and acidic residues. Residues 718-734 (SSMGSRSSSSGSLNARS) show a composition bias toward low complexity. Residue S740 is modified to Phosphoserine. Coiled coils occupy residues 759 to 803 (AMLI…IQSY) and 855 to 894 (KLQA…LEQR).

In Homo sapiens (Human), this protein is Coiled-coil domain-containing protein 186 (CCDC186).